The primary structure comprises 180 residues: Large ribosomal subunit protein uL5 (180 aa).

It belongs to the universal ribosomal protein uL5 family. As to quaternary structure, part of the 50S ribosomal subunit; part of the 5S rRNA/L5/L18/L25 subcomplex. Contacts the 5S rRNA and the P site tRNA. Forms a bridge to the 30S subunit in the 70S ribosome.

In terms of biological role, this is one of the proteins that bind and probably mediate the attachment of the 5S RNA into the large ribosomal subunit, where it forms part of the central protuberance. In the 70S ribosome it contacts protein S13 of the 30S subunit (bridge B1b), connecting the 2 subunits; this bridge is implicated in subunit movement. Contacts the P site tRNA; the 5S rRNA and some of its associated proteins might help stabilize positioning of ribosome-bound tRNAs. The protein is Large ribosomal subunit protein uL5 of Lactobacillus helveticus (strain DPC 4571).